Here is a 424-residue protein sequence, read N- to C-terminus: UDP-sugar transporter protein SLC35A5 (424 aa).

The Cytoplasmic segment spans residues 1–8 (MEKQCCSH). A helical membrane pass occupies residues 9–29 (PVICSLSTMYTFLLGAIFIAL). Residues 30 to 53 (SSSRILLVKYSANEENKYDYLPTT) lie on the Lumenal side of the membrane. A helical membrane pass occupies residues 54–74 (ANVCSELVKLVFCVLVSFCVI). At 75–93 (KKDHQSRNLKYASWKEFSN) the chain is on the cytoplasmic side. A helical membrane pass occupies residues 94 to 116 (FMKWSIPAFLYFLDNLIVFYVLS). Residues 117–119 (YLQ) are Lumenal-facing. Residues 120 to 142 (PAMAVIFSNFSIITTALLFRIVL) form a helical membrane-spanning segment. The Cytoplasmic portion of the chain corresponds to 143-147 (KRRLN). A helical membrane pass occupies residues 148–168 (WIQWASLLILFLSIVALTAGT). The Lumenal portion of the chain corresponds to 169-228 (KTLQHNLAGHGFHHDAFFSPSNSCLLFRSECPRKDNCTAKEWTFPEAKWNTTARVFSHIR). N204 is a glycosylation site (N-linked (GlcNAc...) asparagine). Residues 229–249 (LGMGHVLIIVQCFISSMANIY) form a helical membrane-spanning segment. Residues 250–263 (NEKILKEGNQLAES) are Cytoplasmic-facing. A helical transmembrane segment spans residues 264-284 (IFIQNSKLYFFGILFNGLTLG). Residues 285–303 (LQRSNRDQIKNCGFFYGHN) lie on the Lumenal side of the membrane. The helical transmembrane segment at 304-324 (AFSVALIFVTAFQGLSVAFIL) threads the bilayer. Topologically, residues 325 to 330 (KFLDNM) are cytoplasmic. The helical transmembrane segment at 331 to 351 (FHVLMAQVTTVIITTVSVLVF) threads the bilayer. The Lumenal portion of the chain corresponds to 352–354 (DFR). The chain crosses the membrane as a helical span at residues 355–375 (PSLEFFLEAPSVLLSIFIYNA). Over 376 to 424 (SKPQGPEYAPRQERIRDLSGNLWERSSGDGEELERLTKPKSDESDEDTF) the chain is Cytoplasmic. 3 positions are modified to phosphoserine: S394, S416, and S419. Positions 395 to 424 (GNLWERSSGDGEELERLTKPKSDESDEDTF) are disordered. Residues 408-417 (LERLTKPKSD) show a composition bias toward basic and acidic residues.

Belongs to the nucleotide-sugar transporter family. SLC35A subfamily. In terms of assembly, probably forms homooligomers and heterooligomers with SLC35A1, SLC35A2, SLC35A3 and SLC35A4.

It is found in the golgi apparatus membrane. The enzyme catalyses UMP(out) + UDP-alpha-D-glucuronate(in) = UMP(in) + UDP-alpha-D-glucuronate(out). It catalyses the reaction UMP(out) + UDP-N-acetyl-alpha-D-glucosamine(in) = UMP(in) + UDP-N-acetyl-alpha-D-glucosamine(out). The catalysed reaction is UDP-N-acetyl-alpha-D-galactosamine(in) + UMP(out) = UDP-N-acetyl-alpha-D-galactosamine(out) + UMP(in). Functionally, probable UDP-sugar:UMP transmembrane antiporter involved in UDP-alpha-D-glucuronate/UDP-GlcA, UDP-GlcNAc/UDP-N-acetyl-alpha-D-glucosamine and UDP-N-acetyl-alpha-D-galactosamine/UDP-GalNAc transport from the cytosol to the lumen of the Golgi. This Pongo abelii (Sumatran orangutan) protein is UDP-sugar transporter protein SLC35A5.